We begin with the raw amino-acid sequence, 435 residues long: 5-hydroxybenzimidazole synthase (435 aa).

Residues methionine 95, tyrosine 124, histidine 163, 186–188 (SKG), 227–230 (NGLR), and glutamate 266 each bind substrate. Histidine 270 provides a ligand contact to Zn(2+). Tyrosine 293 is a substrate binding site. Residue histidine 334 coordinates Zn(2+). Cysteine 410, cysteine 413, and cysteine 417 together coordinate [4Fe-4S] cluster.

This sequence belongs to the ThiC family. 5-hydroxybenzimidazole synthase subfamily. In terms of assembly, homodimer. The cofactor is [4Fe-4S] cluster.

It catalyses the reaction 5-amino-1-(5-phospho-beta-D-ribosyl)imidazole + AH2 + S-adenosyl-L-methionine = 5-hydroxybenzimidazole + 5'-deoxyadenosine + formate + L-methionine + A + NH4(+) + phosphate + 2 H(+). Its function is as follows. Catalyzes the conversion of aminoimidazole ribotide (AIR) to 5-hydroxybenzimidazole (5-HBI) in a radical S-adenosyl-L-methionine (SAM)-dependent reaction. Is thus involved in the anaerobic biosynthesis of the benzimidazole lower axial ligand of the cobamide produced by G.metallireducens. This is 5-hydroxybenzimidazole synthase from Geobacter metallireducens (strain ATCC 53774 / DSM 7210 / GS-15).